The following is a 564-amino-acid chain: Adenine deaminase (564 aa).

The protein belongs to the metallo-dependent hydrolases superfamily. Adenine deaminase family. The cofactor is Mn(2+).

It catalyses the reaction adenine + H2O + H(+) = hypoxanthine + NH4(+). The sequence is that of Adenine deaminase from Deinococcus geothermalis (strain DSM 11300 / CIP 105573 / AG-3a).